The following is a 321-amino-acid chain: Non-canonical heme oxygenase HOZ, chloroplastic (321 aa).

The transit peptide at 1-45 (MKSLVAHFSTPLITARLVPRCIIHRASISAVSFSTVRRRFSPLTM) directs the protein to the chloroplast. The interval 96 to 116 (CGMLSTFSQKYEGYPSGSMVD) is dimerization. Residues S130, V134, and H135 each coordinate heme b. Dimerization regions lie at residues 144 to 166 (KCSLLIARDPEDRTGLRITLHGD) and 205 to 208 (KVVR).

Homodimer. Binds to heme in the interdimer interface; the heme iron is coordinated by a fixed water molecule.

The protein resides in the plastid. It localises to the chloroplast. In terms of biological role, dimeric beta-barrel protein binding to heme and catalyzing its degradation to produce biliverdin. May function in the tetrapyrrole biosynthetic pathway. The sequence is that of Non-canonical heme oxygenase HOZ, chloroplastic from Arabidopsis thaliana (Mouse-ear cress).